A 302-amino-acid polypeptide reads, in one-letter code: 33 kDa chaperonin (302 aa).

Disulfide bonds link Cys-247-Cys-249 and Cys-280-Cys-283.

It belongs to the HSP33 family. Under oxidizing conditions two disulfide bonds are formed involving the reactive cysteines. Under reducing conditions zinc is bound to the reactive cysteines and the protein is inactive.

The protein localises to the cytoplasm. In terms of biological role, redox regulated molecular chaperone. Protects both thermally unfolding and oxidatively damaged proteins from irreversible aggregation. Plays an important role in the bacterial defense system toward oxidative stress. This chain is 33 kDa chaperonin, found in Prochlorococcus marinus (strain MIT 9301).